A 420-amino-acid polypeptide reads, in one-letter code: MPLQVSDYSWQQTKTAVFLSLPLKGVCVRDTDVFCMENYLKVNFPPFLFEAFLYAPIDDESSKAKIGNDTIVFTLYKKEAAMWETLSVTGVDKEMMQRIREKSILQAQERAKEATEAKAAAKREDQKYALSVMMKIEEEERKKIEDMKENERIKATKELEAWKEYQRKAEEQKKIQREEKLCQKEKQIKEERKKIKYKSLTRNLASRNLAPKGRNSENIFTEKLKEDSIPAPRSVGSIKINFTPRVFPTALRESQVAEEEEWLHKQAEARRAMNTDIAELCDLKEEEKNPEWLKDKGNKLFATENYLAAINAYNLAIRLNNKMPLLYLNRAACHLKLKNLHKAIEDSSKALELLMPPVTDNANARMKAHVRRGTAFCQLELYVEGLQDYEAALKIDPSNKIVQIDAEKIRNVIQGTELKS.

One can recognise a CS domain in the interval 3–87 (LQVSDYSWQQ…KEAAMWETLS (85 aa)). The mediates interaction with ESR1 and STUB1 stretch occupies residues 7-103 (DYSWQQTKTA…EMMQRIREKS (97 aa)). TPR repeat units follow at residues 290-323 (PEWL…NNKM), 324-357 (PLLY…LMPP), and 366-399 (MKAH…DPSN).

In terms of assembly, interacts with ZMYND10. Interacts with STUB1. Interacts with ESR1 and ESR2. Interacts with DNAAF2. Interacts with CCT3, CCT4, CCT5 and CCT8. Interacts with DNAAF6/PIH1D3.

The protein resides in the nucleus. It localises to the cytoplasm. Its subcellular location is the cell projection. The protein localises to the neuron projection. It is found in the dynein axonemal particle. Involved in neuronal migration during development of the cerebral neocortex. May regulate the stability and proteasomal degradation of the estrogen receptors that play an important role in neuronal differentiation, survival and plasticity. Axonemal dynein assembly factor required for ciliary motility. The chain is Dynein axonemal assembly factor 4 from Pan troglodytes (Chimpanzee).